We begin with the raw amino-acid sequence, 141 residues long: Nucleoside triphosphatase NudI (141 aa).

The 141-residue stretch at 1-141 (MRQRTIVCPL…RHTLALKGLL (141 aa)) folds into the Nudix hydrolase domain. The Nudix box signature appears at 38–59 (GGVEPGERIEEALRREVREELG).

The protein belongs to the Nudix hydrolase family. NudI subfamily. Monomer. Mg(2+) serves as cofactor.

It carries out the reaction a ribonucleoside 5'-triphosphate + H2O = a ribonucleoside 5'-phosphate + diphosphate + H(+). It catalyses the reaction a 2'-deoxyribonucleoside 5'-triphosphate + H2O = a 2'-deoxyribonucleoside 5'-phosphate + diphosphate + H(+). The catalysed reaction is dUTP + H2O = dUMP + diphosphate + H(+). The enzyme catalyses dTTP + H2O = dTMP + diphosphate + H(+). It carries out the reaction dCTP + H2O = dCMP + diphosphate + H(+). Its function is as follows. Catalyzes the hydrolysis of nucleoside triphosphates, with a preference for pyrimidine deoxynucleoside triphosphates (dUTP, dTTP and dCTP). The chain is Nucleoside triphosphatase NudI from Salmonella schwarzengrund (strain CVM19633).